The chain runs to 507 residues: Cytochrome P450 monooxygenase cloA (507 aa).

Residues 15 to 35 (WTWILLTTCIALTSPLVLKGI) form a helical membrane-spanning segment. Asparagine 247 carries N-linked (GlcNAc...) asparagine glycosylation. Heme is bound at residue cysteine 450.

Belongs to the cytochrome P450 family. It depends on heme as a cofactor.

The protein localises to the membrane. Its pathway is alkaloid biosynthesis; ergot alkaloid biosynthesis. In terms of biological role, cytochrome P450 monooxygenase; part of the gene cluster that mediates the biosynthesis of fungal ergot alkaloid. DmaW catalyzes the first step of ergot alkaloid biosynthesis by condensing dimethylallyl diphosphate (DMAP) and tryptophan to form 4-dimethylallyl-L-tryptophan. The second step is catalyzed by the methyltransferase easF that methylates 4-dimethylallyl-L-tryptophan in the presence of S-adenosyl-L-methionine, resulting in the formation of 4-dimethylallyl-L-abrine. The catalase easC and the FAD-dependent oxidoreductase easE then transform 4-dimethylallyl-L-abrine to chanoclavine-I which is further oxidized by easD in the presence of NAD(+), resulting in the formation of chanoclavine-I aldehyde. Agroclavine dehydrogenase easG then mediates the conversion of chanoclavine-I aldehyde to agroclavine via a non-enzymatic adduct reaction: the substrate is an iminium intermediate that is formed spontaneously from chanoclavine-I aldehyde in the presence of glutathione. The presence of easA is not required to complete this reaction. Further conversion of agroclavine to paspalic acid is a two-step process involving oxidation of agroclavine to elymoclavine and of elymoclavine to paspalic acid, the second step being performed by the elymoclavine oxidase cloA. Paspalic acid is then further converted to D-lysergic acid. Ergopeptines are assembled from D-lysergic acid and three different amino acids by the D-lysergyl-peptide-synthetases composed each of a monomudular and a trimodular nonribosomal peptide synthetase subunit. LpsB and lpsC encode the monomodular subunits responsible for D-lysergic acid activation and incorporation into the ergopeptine backbone. LpsA1 and A2 subunits encode the trimodular nonribosomal peptide synthetase assembling the tripeptide portion of ergopeptines. LpsA1 is responsible for formation of the major ergopeptine, ergotamine, and lpsA2 for alpha-ergocryptine, the minor ergopeptine of the total alkaloid mixture elaborated by C.purpurea. D-lysergyl-tripeptides are assembled by the nonribosomal peptide synthetases and released as N-(D-lysergyl-aminoacyl)-lactams. Cyclolization of the D-lysergyl-tripeptides is performed by the Fe(2+)/2-ketoglutarate-dependent dioxygenase easH which introduces a hydroxyl group into N-(D-lysergyl-aminoacyl)-lactam at alpha-C of the aminoacyl residue followed by spontaneous condensation with the terminal lactam carbonyl group. This is Cytochrome P450 monooxygenase cloA from Claviceps purpurea (Ergot fungus).